A 125-amino-acid chain; its full sequence is Dirigent protein 22 (125 aa).

3 N-linked (GlcNAc...) asparagine glycosylation sites follow: Asn-8, Asn-30, and Asn-65.

It belongs to the plant dirigent protein family. In terms of assembly, homodimer.

It is found in the secreted. The protein localises to the extracellular space. The protein resides in the apoplast. Functionally, dirigent proteins impart stereoselectivity on the phenoxy radical-coupling reaction, yielding optically active lignans from two molecules of coniferyl alcohol in the biosynthesis of lignans, flavonolignans, and alkaloids and thus plays a central role in plant secondary metabolism. The protein is Dirigent protein 22 (DIR22) of Arabidopsis thaliana (Mouse-ear cress).